The primary structure comprises 425 residues: Protein disulfide isomerase-like 5-3 (425 aa).

The signal sequence occupies residues 1 to 28 (MGKPTLPPVVVVVVLLLLVVVLPATTCG). The Thioredoxin domain occupies 29–153 (ADAGGGGEAE…LVENLKKLVA (125 aa)). Active-site nucleophile residues include cysteine 75 and cysteine 78. Cysteine 75 and cysteine 78 are joined by a disulfide. Residues 386–406 (LLGVNAVYILVFLVAVLVLLM) traverse the membrane as a helical segment.

The protein belongs to the protein disulfide isomerase family.

It is found in the membrane. Functionally, acts as a protein-folding catalyst that interacts with nascent polypeptides to catalyze the formation, isomerization, and reduction or oxidation of disulfide bonds. May play a role in storage protein biogenesis. The polypeptide is Protein disulfide isomerase-like 5-3 (PDIL5-3) (Oryza sativa subsp. japonica (Rice)).